Consider the following 265-residue polypeptide: Ribosomal RNA small subunit methyltransferase A (265 aa).

The S-adenosyl-L-methionine site is built by N13, L15, G40, E61, D85, and N103.

It belongs to the class I-like SAM-binding methyltransferase superfamily. rRNA adenine N(6)-methyltransferase family. RsmA subfamily.

It is found in the cytoplasm. It carries out the reaction adenosine(1518)/adenosine(1519) in 16S rRNA + 4 S-adenosyl-L-methionine = N(6)-dimethyladenosine(1518)/N(6)-dimethyladenosine(1519) in 16S rRNA + 4 S-adenosyl-L-homocysteine + 4 H(+). Specifically dimethylates two adjacent adenosines (A1518 and A1519) in the loop of a conserved hairpin near the 3'-end of 16S rRNA in the 30S particle. May play a critical role in biogenesis of 30S subunits. The protein is Ribosomal RNA small subunit methyltransferase A of Aromatoleum aromaticum (strain DSM 19018 / LMG 30748 / EbN1) (Azoarcus sp. (strain EbN1)).